Here is a 579-residue protein sequence, read N- to C-terminus: Putative laccase-9 (579 aa).

Positions 1–27 (MGTAKLPALLWLLAGVVLALAVNPAHG) are cleaved as a signal peptide. Plastocyanin-like domains lie at 36–152 (FITE…PKRG) and 162–319 (KEIP…YTDS). N-linked (GlcNAc...) asparagine glycosylation is found at Asn-41 and Asn-82. Positions 86 and 88 each coordinate Cu cation. Asn-114 carries N-linked (GlcNAc...) asparagine glycosylation. Cu cation-binding residues include His-131 and His-133. N-linked (GlcNAc...) asparagine glycans are attached at residues Asn-307, Asn-405, and Asn-446. In terms of domain architecture, Plastocyanin-like 3 spans 436–563 (PTAFVDPPVN…DTVFIVKDGK (128 aa)). Cu cation is bound by residues His-480, His-483, and His-485. Asn-496 is a glycosylation site (N-linked (GlcNAc...) asparagine). 5 residues coordinate Cu cation: His-542, Cys-543, His-544, His-548, and Met-553.

The protein belongs to the multicopper oxidase family. The cofactor is Cu cation.

Its subcellular location is the secreted. It localises to the extracellular space. The protein resides in the apoplast. It catalyses the reaction 4 hydroquinone + O2 = 4 benzosemiquinone + 2 H2O. Its function is as follows. Lignin degradation and detoxification of lignin-derived products. The protein is Putative laccase-9 (LAC9) of Oryza sativa subsp. japonica (Rice).